The chain runs to 519 residues: MSDLVKSSEVIETTEVPPHNNNNNKRHFKYDSEQRKQRLAGGVKLKDALMILCAGFALISDGYQNNVMSMMNKVFALEYPKEYTASLSTQVSNASLVGTIFGQVIIGLTADYIGRKWSIVTATCFLIFGTMMCAASHGKTVNGMFWMLTIFRGVTGFGIGAEYPSSSVTASEAANESVKRRGGAFILATNLPLSFGGPFALCIFLIVRRICGNHLDAIWRTMFAIGCFWPLSVFYFRLKMVTSELYTKSAIKQRAPYWLALKYYWPRLIGTCVAWFLYDFVTFPNGIFSAGIISNVIPKSEKNNLEKIAEWNLLLGAIALPGVFVGAYVVDILGRKYTMMIGFCGYIVFGLIVGCGYHQIKPITGLFIVFYGLMMSCGNFGPGNNMGLTSSESFATPIRGTAYGISAAIGKVGAVVGTKTFSPIQKNLGDKWTFIIAAICGLAGVLVTFIFIPHLKDEDLLEEDVKFKNYLIDNGWKGKFGIQEYDEEEDLEGSSEDSSDGEIVKNNTKNDVEKVDALK.

The disordered stretch occupies residues 1–32; it reads MSDLVKSSEVIETTEVPPHNNNNNKRHFKYDS. The helical transmembrane segment at 39-59 threads the bilayer; sequence LAGGVKLKDALMILCAGFALI. The N-linked (GlcNAc...) asparagine glycan is linked to Asn-93. The next 3 helical transmembrane spans lie at 94-114, 117-137, and 141-161; these read ASLVGTIFGQVIIGLTADYIG, WSIVTATCFLIFGTMMCAASH, and VNGMFWMLTIFRGVTGFGIGA. The N-linked (GlcNAc...) asparagine glycan is linked to Asn-175. 8 helical membrane-spanning segments follow: residues 186–206, 216–236, 273–293, 313–333, 337–357, 363–383, 404–424, and 432–452; these read ILATNLPLSFGGPFALCIFLI, DAIWRTMFAIGCFWPLSVFYF, VAWFLYDFVTFPNGIFSAGII, LLLGAIALPGVFVGAYVVDIL, YTMMIGFCGYIVFGLIVGCGY, ITGLFIVFYGLMMSCGNFGPG, GISAAIGKVGAVVGTKTFSPI, and WTFIIAAICGLAGVLVTFIFI. The segment covering 487-500 has biased composition (acidic residues); it reads EEEDLEGSSEDSSD. The segment at 487 to 519 is disordered; sequence EEEDLEGSSEDSSDGEIVKNNTKNDVEKVDALK. N-linked (GlcNAc...) asparagine glycosylation occurs at Asn-506. Over residues 508–519 the composition is skewed to basic and acidic residues; sequence TKNDVEKVDALK.

The protein belongs to the major facilitator superfamily. Sugar transporter (TC 2.A.1.1) family.

The protein resides in the cell membrane. The enzyme catalyses sn-glycero-3-phospho-1D-myo-inositol(out) = sn-glycero-3-phospho-1D-myo-inositol(in). Glycerophosphodiester transporter that mediates uptake of glycerophosphoinositol (GroPIns) as a source of inositol and phosphate. Does not possess detectable glycerophosphocholine (GroPCho) transport activity. Although no glycerophosphoinositol transport activity occurs in the absence of GIT1, C.albicans is still able to use glycerophosphoinositol as a phosphate source at pH 7.5, albeit slowly. Thus, a second, GIT1-independent, mechanism must exist for utilizing glycerophosphoinositol as a phosphate source at physiological pH. The expanded ability to utilize GroPIns and GroPCho results from the organism's pathogenic nature and its need to occupy a variety of environments within its host organism. This possibility is buttressed by the fact that GroPIns and GroPCho are present and abundant in human fluids. This chain is Glycerophosphoinositol permease 1, found in Candida albicans (strain SC5314 / ATCC MYA-2876) (Yeast).